The primary structure comprises 146 residues: Large ribosomal subunit protein mL41 (146 aa).

The transit peptide at 1 to 16 (MKGSPISQFSKTSINA) directs the protein to the mitochondrion.

It belongs to the mitochondrion-specific ribosomal protein mL41 family. In terms of assembly, component of the mitochondrial large ribosomal subunit (mt-LSU). Mature yeast 74S mitochondrial ribosomes consist of a small (37S) and a large (54S) subunit. The 37S small subunit contains a 15S ribosomal RNA (15S mt-rRNA) and 34 different proteins. The 54S large subunit contains a 21S rRNA (21S mt-rRNA) and 46 different proteins.

The protein localises to the mitochondrion. Functionally, component of the mitochondrial ribosome (mitoribosome), a dedicated translation machinery responsible for the synthesis of mitochondrial genome-encoded proteins, including at least some of the essential transmembrane subunits of the mitochondrial respiratory chain. The mitoribosomes are attached to the mitochondrial inner membrane and translation products are cotranslationally integrated into the membrane. The sequence is that of Large ribosomal subunit protein mL41 (MRPL27) from Saccharomyces cerevisiae (strain ATCC 204508 / S288c) (Baker's yeast).